The following is a 166-amino-acid chain: SsrA-binding protein (166 aa).

The segment at 143–166 is disordered; that stretch reads HDKREDDKRKQANRDMKSALARYR. Residues 144 to 159 show a composition bias toward basic and acidic residues; that stretch reads DKREDDKRKQANRDMK.

Belongs to the SmpB family.

It localises to the cytoplasm. In terms of biological role, required for rescue of stalled ribosomes mediated by trans-translation. Binds to transfer-messenger RNA (tmRNA), required for stable association of tmRNA with ribosomes. tmRNA and SmpB together mimic tRNA shape, replacing the anticodon stem-loop with SmpB. tmRNA is encoded by the ssrA gene; the 2 termini fold to resemble tRNA(Ala) and it encodes a 'tag peptide', a short internal open reading frame. During trans-translation Ala-aminoacylated tmRNA acts like a tRNA, entering the A-site of stalled ribosomes, displacing the stalled mRNA. The ribosome then switches to translate the ORF on the tmRNA; the nascent peptide is terminated with the 'tag peptide' encoded by the tmRNA and targeted for degradation. The ribosome is freed to recommence translation, which seems to be the essential function of trans-translation. This is SsrA-binding protein from Prochlorococcus marinus (strain MIT 9211).